Reading from the N-terminus, the 328-residue chain is Sulfate adenylyltransferase subunit 2 (328 aa).

Disordered stretches follow at residues 15–34 (AAPD…PSSH) and 304–328 (SERE…EGYF).

Belongs to the PAPS reductase family. CysD subfamily. As to quaternary structure, heterodimer composed of CysD, the smaller subunit, and CysN.

The catalysed reaction is sulfate + ATP + H(+) = adenosine 5'-phosphosulfate + diphosphate. It participates in sulfur metabolism; hydrogen sulfide biosynthesis; sulfite from sulfate: step 1/3. Functionally, with CysN forms the ATP sulfurylase (ATPS) that catalyzes the adenylation of sulfate producing adenosine 5'-phosphosulfate (APS) and diphosphate, the first enzymatic step in sulfur assimilation pathway. APS synthesis involves the formation of a high-energy phosphoric-sulfuric acid anhydride bond driven by GTP hydrolysis by CysN coupled to ATP hydrolysis by CysD. This is Sulfate adenylyltransferase subunit 2 from Rhodopseudomonas palustris (strain BisA53).